The sequence spans 146 residues: Anti-sigma F factor (146 aa).

Belongs to the anti-sigma-factor family.

It catalyses the reaction L-seryl-[protein] + ATP = O-phospho-L-seryl-[protein] + ADP + H(+). The catalysed reaction is L-threonyl-[protein] + ATP = O-phospho-L-threonyl-[protein] + ADP + H(+). Functionally, binds to sigma F and blocks its ability to form an RNA polymerase holoenzyme (E-sigma F). Phosphorylates SpoIIAA on a serine residue. This phosphorylation may enable SpoIIAA to act as an anti-anti-sigma factor that counteracts SpoIIAB and thus releases sigma F from inhibition. In Bacillus cereus (strain ATCC 14579 / DSM 31 / CCUG 7414 / JCM 2152 / NBRC 15305 / NCIMB 9373 / NCTC 2599 / NRRL B-3711), this protein is Anti-sigma F factor.